The sequence spans 317 residues: MLSCLLRNDKRLEVFFSALDMKKSYLLALSGGSDSLFLLYLLKSRGVSFTAVHVDYGWRESSYREAEELKLRCQEEGVPLIVDHVPSKYTTSKDPENTARRYRYALFCKICREDNLAGIFLAHHANDQAETVLKRVLEGASLGNLKGMTSGASYNRIPLLRPLLHIPKQVLMQTLDAENIAYVHDVTNTDERYLRARMRNKIFPWLEEIFAKNITQPLLTLAQDSEELSCYMKQQAQPFLENIRQEHTTWSIEIPKPLIEQVFLAKWVCKEFFYKVGIVVSRHFLQMVYDHLSRNLPAEMRLRDKRVIVKAGVVMIE.

An ATP-binding site is contributed by 30-35; it reads SGGSDS.

The protein belongs to the tRNA(Ile)-lysidine synthase family.

The protein resides in the cytoplasm. It carries out the reaction cytidine(34) in tRNA(Ile2) + L-lysine + ATP = lysidine(34) in tRNA(Ile2) + AMP + diphosphate + H(+). Ligates lysine onto the cytidine present at position 34 of the AUA codon-specific tRNA(Ile) that contains the anticodon CAU, in an ATP-dependent manner. Cytidine is converted to lysidine, thus changing the amino acid specificity of the tRNA from methionine to isoleucine. The chain is tRNA(Ile)-lysidine synthase from Chlamydia abortus (strain DSM 27085 / S26/3) (Chlamydophila abortus).